A 182-amino-acid chain; its full sequence is Sec-independent protein translocase protein TatB (182 aa).

Residues 1–21 (MFDIGFSELLLVFVIGLIVLG) form a helical membrane-spanning segment. 2 disordered regions span residues 88–107 (AAESMKRTYSANDPEQASDE) and 121–182 (TQHE…SDKP). Residues 168 to 182 (AAPVVESSPSSSDKP) are compositionally biased toward low complexity.

This sequence belongs to the TatB family. The Tat system comprises two distinct complexes: a TatABC complex, containing multiple copies of TatA, TatB and TatC subunits, and a separate TatA complex, containing only TatA subunits. Substrates initially bind to the TatABC complex, which probably triggers association of the separate TatA complex to form the active translocon.

It localises to the cell inner membrane. In terms of biological role, part of the twin-arginine translocation (Tat) system that transports large folded proteins containing a characteristic twin-arginine motif in their signal peptide across membranes. Together with TatC, TatB is part of a receptor directly interacting with Tat signal peptides. TatB may form an oligomeric binding site that transiently accommodates folded Tat precursor proteins before their translocation. This Salmonella typhi protein is Sec-independent protein translocase protein TatB.